Reading from the N-terminus, the 170-residue chain is Crossover junction endodeoxyribonuclease RuvC (170 aa).

Active-site residues include Asp9, Glu70, and Asp145. The Mg(2+) site is built by Asp9, Glu70, and Asp145.

The protein belongs to the RuvC family. As to quaternary structure, homodimer which binds Holliday junction (HJ) DNA. The HJ becomes 2-fold symmetrical on binding to RuvC with unstacked arms; it has a different conformation from HJ DNA in complex with RuvA. In the full resolvosome a probable DNA-RuvA(4)-RuvB(12)-RuvC(2) complex forms which resolves the HJ. Mg(2+) is required as a cofactor.

Its subcellular location is the cytoplasm. It catalyses the reaction Endonucleolytic cleavage at a junction such as a reciprocal single-stranded crossover between two homologous DNA duplexes (Holliday junction).. In terms of biological role, the RuvA-RuvB-RuvC complex processes Holliday junction (HJ) DNA during genetic recombination and DNA repair. Endonuclease that resolves HJ intermediates. Cleaves cruciform DNA by making single-stranded nicks across the HJ at symmetrical positions within the homologous arms, yielding a 5'-phosphate and a 3'-hydroxyl group; requires a central core of homology in the junction. The consensus cleavage sequence is 5'-(A/T)TT(C/G)-3'. Cleavage occurs on the 3'-side of the TT dinucleotide at the point of strand exchange. HJ branch migration catalyzed by RuvA-RuvB allows RuvC to scan DNA until it finds its consensus sequence, where it cleaves and resolves the cruciform DNA. This is Crossover junction endodeoxyribonuclease RuvC from Chlamydia trachomatis serovar A (strain ATCC VR-571B / DSM 19440 / HAR-13).